The primary structure comprises 333 residues: Adenosine deaminase (333 aa).

Zn(2+)-binding residues include His12 and His14. Positions 14, 16, and 170 each coordinate substrate. Position 197 (His197) interacts with Zn(2+). The active-site Proton donor is Glu200. Asp278 is a Zn(2+) binding site. Asp279 lines the substrate pocket.

Belongs to the metallo-dependent hydrolases superfamily. Adenosine and AMP deaminases family. Adenosine deaminase subfamily. Requires Zn(2+) as cofactor.

It carries out the reaction adenosine + H2O + H(+) = inosine + NH4(+). The catalysed reaction is 2'-deoxyadenosine + H2O + H(+) = 2'-deoxyinosine + NH4(+). In terms of biological role, catalyzes the hydrolytic deamination of adenosine and 2-deoxyadenosine. The chain is Adenosine deaminase from Salmonella dublin (strain CT_02021853).